We begin with the raw amino-acid sequence, 78 residues long: Rubredoxin (78 aa).

The Rubredoxin-like domain occupies 23–74 (DARLECKICWWEYDPEVGDPVWQIAPGTSFSALPAHWRCPNCDGEAEQFMVL). Residues Cys28, Cys31, Cys61, and Cys64 each contribute to the Fe cation site.

The protein belongs to the rubredoxin family. Fe(3+) is required as a cofactor.

In terms of biological role, rubredoxin is a small nonheme, iron protein lacking acid-labile sulfide. Its single Fe, chelated to 4 Cys, functions as an electron acceptor and may also stabilize the conformation of the molecule. Could be involved in hydrogenase-linked redox processes. The sequence is that of Rubredoxin (hoxR) from Cupriavidus necator (strain ATCC 17699 / DSM 428 / KCTC 22496 / NCIMB 10442 / H16 / Stanier 337) (Ralstonia eutropha).